Consider the following 134-residue polypeptide: NADH-quinone oxidoreductase subunit A (134 aa).

A run of 3 helical transmembrane segments spans residues 12-32 (FAIYVIAAICLCLVMIGLAAL), 64-84 (FYLVAMFFVIFDVEALYLFAW), and 93-113 (WVGFIEAAIFIGLLLVGLLYL).

Belongs to the complex I subunit 3 family. As to quaternary structure, NDH-1 is composed of 14 different subunits. Subunits NuoA, H, J, K, L, M, N constitute the membrane sector of the complex.

The protein localises to the cell inner membrane. The catalysed reaction is a quinone + NADH + 5 H(+)(in) = a quinol + NAD(+) + 4 H(+)(out). NDH-1 shuttles electrons from NADH, via FMN and iron-sulfur (Fe-S) centers, to quinones in the respiratory chain. The immediate electron acceptor for the enzyme in this species is believed to be ubiquinone. Couples the redox reaction to proton translocation (for every two electrons transferred, four hydrogen ions are translocated across the cytoplasmic membrane), and thus conserves the redox energy in a proton gradient. This is NADH-quinone oxidoreductase subunit A from Aeromonas salmonicida (strain A449).